The sequence spans 542 residues: Chaperonin GroEL 2 (542 aa).

Residues 30–33, Lys-51, 87–91, Gly-415, and Asp-496 each bind ATP; these read TLGP and DGTTT.

The protein belongs to the chaperonin (HSP60) family. Forms a cylinder of 14 subunits composed of two heptameric rings stacked back-to-back. Interacts with the co-chaperonin GroES.

The protein localises to the cytoplasm. It catalyses the reaction ATP + H2O + a folded polypeptide = ADP + phosphate + an unfolded polypeptide.. Functionally, together with its co-chaperonin GroES, plays an essential role in assisting protein folding. The GroEL-GroES system forms a nano-cage that allows encapsulation of the non-native substrate proteins and provides a physical environment optimized to promote and accelerate protein folding. This is Chaperonin GroEL 2 from Sinorhizobium fredii (strain NBRC 101917 / NGR234).